We begin with the raw amino-acid sequence, 839 residues long: Homeobox-leucine zipper protein HOX10 (839 aa).

Disordered stretches follow at residues 1 to 24 (MAAA…SGMD) and 132 to 157 (QNTP…RDAS). Positions 24–87 (DSGKYVRYTP…NRRCRDKQRK (64 aa)) form a DNA-binding region, homeobox. The stretch at 91 to 134 (RLQAVNRKLTAMNKLLMEENERLQKQVSQLVHENAHMRQQLQNT) forms a coiled coil. Positions 155 to 383 (DASNPSGLLS…IAQETSGEVV (229 aa)) constitute an START domain.

Belongs to the HD-ZIP homeobox family. Class III subfamily. As to expression, expressed in stems, leaf sheaths and blades and panicles.

It is found in the nucleus. Functionally, probable transcription factor. This Oryza sativa subsp. japonica (Rice) protein is Homeobox-leucine zipper protein HOX10 (HOX10).